Here is a 631-residue protein sequence, read N- to C-terminus: Phosphomethylpyrimidine synthase (631 aa).

Substrate-binding positions include Asn239, Met268, Tyr297, His333, 353–355 (SRG), 394–397 (DGLR), and Glu433. Residue His437 coordinates Zn(2+). Tyr460 provides a ligand contact to substrate. Residue His501 participates in Zn(2+) binding. [4Fe-4S] cluster contacts are provided by Cys581, Cys584, and Cys589.

It belongs to the ThiC family. In terms of assembly, homodimer. [4Fe-4S] cluster serves as cofactor.

The catalysed reaction is 5-amino-1-(5-phospho-beta-D-ribosyl)imidazole + S-adenosyl-L-methionine = 4-amino-2-methyl-5-(phosphooxymethyl)pyrimidine + CO + 5'-deoxyadenosine + formate + L-methionine + 3 H(+). It functions in the pathway cofactor biosynthesis; thiamine diphosphate biosynthesis. In terms of biological role, catalyzes the synthesis of the hydroxymethylpyrimidine phosphate (HMP-P) moiety of thiamine from aminoimidazole ribotide (AIR) in a radical S-adenosyl-L-methionine (SAM)-dependent reaction. The polypeptide is Phosphomethylpyrimidine synthase (Escherichia coli O157:H7).